We begin with the raw amino-acid sequence, 926 residues long: Lipoxygenase 4, chloroplastic (926 aa).

The transit peptide at 1 to 58 (MALANEIMGSRLIFERSSSLASPFHSRFSIKKKTQRTQFSINPFDPRPMRAVNSSGVV) directs the protein to the chloroplast. The PLAT domain occupies 106–228 (FKETLVKHLD…DHPSKRILFT (123 aa)). The Lipoxygenase domain maps to 231–926 (PYLPSETPSG…CRGVPNSVSI (696 aa)). Positions 585, 590, 777, 781, and 926 each coordinate Fe cation.

It belongs to the lipoxygenase family. The cofactor is Fe cation. Expressed in leaves.

The protein resides in the plastid. It is found in the chloroplast. It catalyses the reaction (9Z,12Z)-octadecadienoate + O2 = (13S)-hydroperoxy-(9Z,11E)-octadecadienoate. It carries out the reaction (9Z,12Z,15Z)-octadecatrienoate + O2 = (13S)-hydroperoxy-(9Z,11E,15Z)-octadecatrienoate. Its pathway is lipid metabolism; oxylipin biosynthesis. In terms of biological role, plant lipoxygenases may be involved in a number of diverse aspects of plant physiology including growth and development, pest resistance, and senescence or responses to wounding. Catalyzes the hydroperoxidation of lipids containing a cis,cis-1,4-pentadiene structure. 13S-lipoxygenase that can use linolenic acid as substrates. The chain is Lipoxygenase 4, chloroplastic (LOX4) from Arabidopsis thaliana (Mouse-ear cress).